Here is a 977-residue protein sequence, read N- to C-terminus: Serine/threonine-protein kinase N2 (977 aa).

3 consecutive REM-1 domains span residues 24–100, 114–194, and 200–280; these read NLDF…HIVV, DTPK…TSEI, and DVTT…ELPK. A C2 domain is found at 298 to 468; sequence PPNSPRQSIM…LYLEPQGTLF (171 aa). Disordered regions lie at residues 342-381 and 531-576; these read GRSK…LSKS and AADL…KRNS. The segment covering 358–378 has biased composition (polar residues); that stretch reads EARSSFMSRGNKNKSGSSRTL. The Protein kinase domain maps to 650–909; it reads FKCVAVLGRG…AEEVKRHPFF (260 aa). Residues 656 to 664 and K679 each bind ATP; that span reads LGRGHFGKV. The active-site Proton acceptor is D775. Positions 910 to 977 constitute an AGC-kinase C-terminal domain; that stretch reads RDMDWPGLLA…ADFDYIADWC (68 aa).

The protein belongs to the protein kinase superfamily. AGC Ser/Thr protein kinase family. PKC subfamily. Autophosphorylated. Phosphorylated. Post-translationally, proteolytically cleaved.

It localises to the cytoplasm. The protein localises to the nucleus. It is found in the membrane. Its subcellular location is the cell projection. The protein resides in the lamellipodium. It localises to the cytoskeleton. The protein localises to the cleavage furrow. It is found in the midbody. Its subcellular location is the cell junction. The enzyme catalyses L-seryl-[protein] + ATP = O-phospho-L-seryl-[protein] + ADP + H(+). It catalyses the reaction L-threonyl-[protein] + ATP = O-phospho-L-threonyl-[protein] + ADP + H(+). Kinase activity is activated upon binding to GTP-bound Rho/Rac GTPases. Activated by lipids, particularly cardiolipin and to a lesser extent by other acidic phospholipids and unsaturated fatty acids. Two specific sites, Thr-809 (activation loop of the kinase domain) and Thr-951 (turn motif), may be needed to be phosphorylated for its full activation. Pkc-related serine/threonine-protein kinase and Rho/Rac effector protein that participates in specific signal transduction responses in the cell. May play a role in the regulation of cell cycle progression, actin cytoskeleton assembly, cell migration, cell adhesion and transcription activation signaling processes. The chain is Serine/threonine-protein kinase N2 (pkn2) from Danio rerio (Zebrafish).